The primary structure comprises 427 residues: Enolase (427 aa).

Residue Q163 participates in (2R)-2-phosphoglycerate binding. E205 functions as the Proton donor in the catalytic mechanism. Mg(2+)-binding residues include D242, E288, and D315. (2R)-2-phosphoglycerate-binding residues include K340, R369, S370, and K391. The Proton acceptor role is filled by K340.

Belongs to the enolase family. Mg(2+) serves as cofactor.

The protein resides in the cytoplasm. It localises to the secreted. It is found in the cell surface. The enzyme catalyses (2R)-2-phosphoglycerate = phosphoenolpyruvate + H2O. The protein operates within carbohydrate degradation; glycolysis; pyruvate from D-glyceraldehyde 3-phosphate: step 4/5. Its function is as follows. Catalyzes the reversible conversion of 2-phosphoglycerate (2-PG) into phosphoenolpyruvate (PEP). It is essential for the degradation of carbohydrates via glycolysis. The chain is Enolase from Cytophaga hutchinsonii (strain ATCC 33406 / DSM 1761 / CIP 103989 / NBRC 15051 / NCIMB 9469 / D465).